A 53-amino-acid chain; its full sequence is Large ribosomal subunit protein bL33B (53 aa).

It belongs to the bacterial ribosomal protein bL33 family.

This is Large ribosomal subunit protein bL33B from Sorangium cellulosum (strain So ce56) (Polyangium cellulosum (strain So ce56)).